The chain runs to 432 residues: Ubiquitin-like modifier-activating enzyme 5 (432 aa).

Residues 25-47 form a disordered region; it reads ETKKNQTPSVLKGPTVSQERPSA. The span at 29-44 shows a compositional bias: polar residues; sequence NQTPSVLKGPTVSQER. Positions 96, 117, 140, 163, and 196 each coordinate ATP. 2 residues coordinate Zn(2+): cysteine 238 and cysteine 241. Catalysis depends on cysteine 262, which acts as the Glycyl thioester intermediate. Residues cysteine 315 and cysteine 320 each coordinate Zn(2+). Residues 363-406 are disordered; sequence DTTEAPSSSAATEVAPGLKFAYEPTQTPKKNSSDNLKLSPSQAV. Residues 386–406 are compositionally biased toward polar residues; sequence PTQTPKKNSSDNLKLSPSQAV.

Belongs to the ubiquitin-activating E1 family. UBA5 subfamily. As to quaternary structure, interacts with ufc-1.

Its function is as follows. E1-like enzyme which activates ufm-1. Required for interaction between ufm-1 and ufc-1. The chain is Ubiquitin-like modifier-activating enzyme 5 from Caenorhabditis briggsae.